We begin with the raw amino-acid sequence, 752 residues long: BCLAF1 and THRAP3 family member 3 (752 aa).

A compositionally biased stretch (basic residues) spans 1 to 13; sequence MARSRSRSPRWKQ. Disordered stretches follow at residues 1-114, 132-177, and 190-252; these read MARS…YMPT, PTVQ…QMSL, and DELR…DPAR. Ser-15 and Ser-17 each carry phosphoserine. Positions 23–57 are enriched in basic and acidic residues; it reads FEYHEERHFHGHYDPEYRHDQQRPFTWRMDDEKHG. Phosphoserine occurs at positions 78 and 80. The span at 85-109 shows a compositional bias: basic and acidic residues; sequence PVEKFDTYKPHQEYFPGRGDDDRRS. Residues 190 to 199 show a composition bias toward basic and acidic residues; sequence DELRHQRVQE. Ser-205 carries the phosphoserine modification. 2 stretches are compositionally biased toward basic and acidic residues: residues 222 to 231 and 238 to 252; these read RYPEDHDFRK and RPTD…DPAR. Residue Lys-416 forms a Glycyl lysine isopeptide (Lys-Gly) (interchain with G-Cter in SUMO2) linkage. Ser-592 is modified (phosphoserine).

It belongs to the BCLAF1/THRAP3 family.

It is found in the mitochondrion. The protein is BCLAF1 and THRAP3 family member 3 of Mus musculus (Mouse).